The sequence spans 690 residues: Crooked neck-like protein 1 (690 aa).

HAT repeat units follow at residues 61–93, 95–127, 129–161, 163–194, 196–227, 229–264, 266–300, 310–342, 344–378, 388–424, 459–491, 493–527, 529–560, 565–606, 608–646, and 648–673; these read DYKL…WEES, KEIQ…MEMK, RQVN…MEEM, GNVA…FELR, KEVE…FEEK, AYFA…FEEN, KEFE…FEKK, IIVS…LVES, AEAD…LWVN, KDPE…FEIR, REFD…LETI, GDIE…FEIE, EETE…FELS, GSVA…EFGT, SDKE…YIFP, and DAAN…EREA. The interval 250-467 is mediates interaction with HSP90; the sequence is MDEHLYVAFA…LREFDRCRKL (218 aa). At serine 342 the chain carries Phosphoserine. The Nuclear localization signal motif lies at 618-626; the sequence is PEKVKKRRK. Over residues 667 to 679 the composition is skewed to basic and acidic residues; sequence QQQEREAAEQDPD. The interval 667–690 is disordered; that stretch reads QQQEREAAEQDPDKDIDESESSSF. A compositionally biased stretch (acidic residues) spans 680-690; sequence KDIDESESSSF. Position 689 is a phosphoserine (serine 689).

It belongs to the crooked-neck family. In terms of assembly, identified in the spliceosome C complex. Present in a spliceosome complex assembled in vitro containing CRNKL1, HPRP8BP and SNRPB2. Component of the minor spliceosome, which splices U12-type introns. Interacts with PPIL2 (via the PPIase cyclophilin-type domain); they may form a trimeric complex with HSP90.

Its subcellular location is the nucleus. It is found in the nucleus speckle. Involved in pre-mRNA splicing process. As a component of the minor spliceosome, involved in the splicing of U12-type introns in pre-mRNAs. This chain is Crooked neck-like protein 1 (Crnkl1), found in Mus musculus (Mouse).